Here is a 1244-residue protein sequence, read N- to C-terminus: Mitotic chromosome and X-chromosome-associated protein mix-1 (1244 aa).

32–39 (GYNGSGKS) is an ATP binding site. Positions 247–355 (VKKSAKEIED…AKRKEHEDSK (109 aa)) form a coiled coil. Over residues 337-355 (LSKDREVLDAKRKEHEDSK) the composition is skewed to basic and acidic residues. The segment at 337–369 (LSKDREVLDAKRKEHEDSKAANSKDIQSQSDDE) is disordered. Positions 356–365 (AANSKDIQSQ) are enriched in polar residues. Residues 415 to 472 (ITAAKKRGERLHNQIKHLEGEKATLSARSKSDIGSADNYQKEVDEINKQLQLLGFNID) are a coiled coil. Residues 526–654 (DVFGYVAHLI…DSLDVAREIA (129 aa)) form the SMC hinge domain. Coiled coils occupy residues 701-946 (PQIE…RKEA) and 975-1037 (YTVS…IATL). Positions 919–932 (AKTKSKREEKEKEL) are enriched in basic and acidic residues. Positions 919–943 (AKTKSKREEKEKELTSLQQSEASNR) are disordered. Over residues 1216 to 1232 (DAAAKKGAQKNDKEPPK) the composition is skewed to basic and acidic residues. Positions 1216 to 1244 (DAAAKKGAQKNDKEPPKKKPIVVDDDDFE) are disordered.

It belongs to the SMC family. SMC2 subfamily. As to quaternary structure, component of the condensin I complex, which contains the mix-1/SMC2 and smc-4/SMC4 heterodimer, and three non SMC subunits that probably regulate the complex: dpy-26, capg-1 and dpy-28. Within the complex, interacts with smc-4, dpy-26, dpy-28 and capg-1. Interaction with smc-4 is required for mitotic chromosome localization. Component of the condensin II complex, which contains the mix-1/SMC2 and smc-4/SMC4 heterodimer, and three non SMC subunits, capg-2, kle-2 and hcp-6 that probably regulate the complex. Within the complex, interacts with smc-4, capg-2, kle-2 and hcp-6. Also a component of the condensin-like dosage compensation complex, which contains the mix-1/SMC2 and dpy-27/SMC4 heterodimer, and three non SMC subunits that probably regulate the complex: dpy-26, capg-1 and dpy-28. Within the complex, interacts with dpy-27, dpy-26, capg-1 and dpy-28. Requires capg-1 for hermaphrodite X chromosome localization. Interacts with smcl-1. Expressed in embryos and in adult somatic and germline tissues (at protein level).

The protein localises to the nucleus. It is found in the chromosome. Functionally, essential protein required for both chromosome condensation and segregation and X-chromosome dosage compensation depending on its binding partners. Central component of the condensin I complex, a complex required for conversion of interphase chromatin into mitotic-like condense chromosomes. The condensin complex introduces positive supercoils into relaxed DNA in the presence of type I topoisomerases. Converts nicked DNA into positive knotted forms in the presence of type II topoisomerases. Central component of the condensin II complex, a complex that seems to play a role in prophase chromosome condensation and organization. Both the condensin complex I and II play a role in meiotic and mitotic chromosome segregation. Plays a role in robust cytokinesis upon the presence of chromatin obstructions. Also a member of the condensin I-like dosage compensation complex that associates specifically with hermaphrodite X chromosomes to reduce their gene transcription during interphase. The sequence is that of Mitotic chromosome and X-chromosome-associated protein mix-1 (mix-1) from Caenorhabditis elegans.